The sequence spans 309 residues: Pyridoxal 5'-phosphate synthase subunit PDX1.3 (309 aa).

At M1 the chain carries N-acetylmethionine. A D-ribose 5-phosphate-binding site is contributed by D40. The Schiff-base intermediate with D-ribose 5-phosphate role is filled by K97. A D-ribose 5-phosphate-binding site is contributed by G169. R181 lines the D-glyceraldehyde 3-phosphate pocket. Residues G230 and 251-252 contribute to the D-ribose 5-phosphate site; that span reads GS.

It belongs to the PdxS/SNZ family. In terms of assembly, homodimer or heterodimer with PDX1.1 or PDX1.2. Interacts with PDX2. In terms of tissue distribution, expressed in cotyledons, rapidly dividing root stele tissues, stems, leaves, flowers, mature pollen, and siliques.

Its subcellular location is the cytoplasm. It localises to the cell membrane. It is found in the membrane. The catalysed reaction is aldehydo-D-ribose 5-phosphate + D-glyceraldehyde 3-phosphate + L-glutamine = pyridoxal 5'-phosphate + L-glutamate + phosphate + 3 H2O + H(+). Its pathway is cofactor biosynthesis; pyridoxal 5'-phosphate biosynthesis. Catalyzes the formation of pyridoxal 5'-phosphate from ribose 5-phosphate (RBP), glyceraldehyde 3-phosphate (G3P) and ammonia. The ammonia is provided by PDX2. Can also use ribulose 5-phosphate and dihydroxyacetone phosphate as substrates, resulting from enzyme-catalyzed isomerization of RBP and G3P, respectively. Also plays an indirect role in resistance to singlet oxygen-generating photosensitizers. The protein is Pyridoxal 5'-phosphate synthase subunit PDX1.3 (PDX13) of Arabidopsis thaliana (Mouse-ear cress).